Here is a 447-residue protein sequence, read N- to C-terminus: Growth/differentiation factor 7 (447 aa).

An N-terminal signal peptide occupies residues 1 to 19 (MDLSAAAALCLWLLSACRP). The propeptide occupies 20-318 (RDGLEAAAVL…AVTAGRRRRR (299 aa)). The N-linked (GlcNAc...) asparagine glycan is linked to N80. The disordered stretch occupies residues 292–346 (LAAQPPPDPGTGTGSPRAVTAGRRRRRTALAGTRTAQGSGGGAGRGHGRRGRSRC). The span at 337-346 (GHGRRGRSRC) shows a compositional bias: basic residues. 3 disulfide bridges follow: C346/C412, C375/C444, and C379/C446.

It belongs to the TGF-beta family. Homodimer; disulfide-linked. As to expression, highly expressed in the primary aera of brain neocortex.

It localises to the secreted. In terms of biological role, may play an active role in the motor area of the primate neocortex. The protein is Growth/differentiation factor 7 (GDF7) of Chlorocebus aethiops (Green monkey).